Reading from the N-terminus, the 221-residue chain is Eukaryotic translation initiation factor 3 subunit K (221 aa).

The PCI domain occupies 46 to 215 (YDLEANLACL…EKIEFDNLAP (170 aa)).

It belongs to the eIF-3 subunit K family. As to quaternary structure, component of the eukaryotic translation initiation factor 3 (eIF-3) complex.

The protein resides in the cytoplasm. Functionally, component of the eukaryotic translation initiation factor 3 (eIF-3) complex, which is involved in protein synthesis of a specialized repertoire of mRNAs and, together with other initiation factors, stimulates binding of mRNA and methionyl-tRNAi to the 40S ribosome. The eIF-3 complex specifically targets and initiates translation of a subset of mRNAs involved in cell proliferation. The sequence is that of Eukaryotic translation initiation factor 3 subunit K from Anopheles gambiae (African malaria mosquito).